A 399-amino-acid chain; its full sequence is 4-hydroxy-3-methylbut-2-enyl diphosphate reductase (399 aa).

C66 lines the [4Fe-4S] cluster pocket. H96 lines the (2E)-4-hydroxy-3-methylbut-2-enyl diphosphate pocket. H96 serves as a coordination point for dimethylallyl diphosphate. An isopentenyl diphosphate-binding site is contributed by H96. A [4Fe-4S] cluster-binding site is contributed by C157. Residue H185 coordinates (2E)-4-hydroxy-3-methylbut-2-enyl diphosphate. A dimethylallyl diphosphate-binding site is contributed by H185. Isopentenyl diphosphate is bound at residue H185. Catalysis depends on E187, which acts as the Proton donor. (2E)-4-hydroxy-3-methylbut-2-enyl diphosphate is bound at residue T250. Position 288 (C288) interacts with [4Fe-4S] cluster. (2E)-4-hydroxy-3-methylbut-2-enyl diphosphate is bound by residues S317, S318, N319, and S379. Residues S317, S318, N319, and S379 each contribute to the dimethylallyl diphosphate site. Isopentenyl diphosphate-binding residues include S317, S318, N319, and S379.

The protein belongs to the IspH family. It depends on [4Fe-4S] cluster as a cofactor.

It carries out the reaction isopentenyl diphosphate + 2 oxidized [2Fe-2S]-[ferredoxin] + H2O = (2E)-4-hydroxy-3-methylbut-2-enyl diphosphate + 2 reduced [2Fe-2S]-[ferredoxin] + 2 H(+). The enzyme catalyses dimethylallyl diphosphate + 2 oxidized [2Fe-2S]-[ferredoxin] + H2O = (2E)-4-hydroxy-3-methylbut-2-enyl diphosphate + 2 reduced [2Fe-2S]-[ferredoxin] + 2 H(+). The protein operates within isoprenoid biosynthesis; dimethylallyl diphosphate biosynthesis; dimethylallyl diphosphate from (2E)-4-hydroxy-3-methylbutenyl diphosphate: step 1/1. It functions in the pathway isoprenoid biosynthesis; isopentenyl diphosphate biosynthesis via DXP pathway; isopentenyl diphosphate from 1-deoxy-D-xylulose 5-phosphate: step 6/6. Its function is as follows. Catalyzes the conversion of 1-hydroxy-2-methyl-2-(E)-butenyl 4-diphosphate (HMBPP) into a mixture of isopentenyl diphosphate (IPP) and dimethylallyl diphosphate (DMAPP). Acts in the terminal step of the DOXP/MEP pathway for isoprenoid precursor biosynthesis. In Synechococcus sp. (strain WH7803), this protein is 4-hydroxy-3-methylbut-2-enyl diphosphate reductase.